The primary structure comprises 306 residues: Brix domain-containing protein C4F8.04 (306 aa).

The disordered stretch occupies residues 16–49 (KALHQKNKDKLERRKERAKEEEKDPEKKRLRLSE). A compositionally biased stretch (basic and acidic residues) spans 21–42 (KNKDKLERRKERAKEEEKDPEK). Residues 94-283 (PKLLVTTSKR…LRMVQKGVWD (190 aa)) form the Brix domain.

This Schizosaccharomyces pombe (strain 972 / ATCC 24843) (Fission yeast) protein is Brix domain-containing protein C4F8.04.